The sequence spans 142 residues: Baculoviral IAP repeat-containing protein 5 (142 aa).

Residues 18–88 (RVSTFKNWPF…KHSSGCAFLS (71 aa)) form a BIR repeat. S20 is subject to Phosphoserine; by AURKC. K23 is subject to N6-acetyllysine. A Phosphothreonine; by CDK1 and CDK15 modification is found at T34. T48 is subject to Phosphothreonine; by CK2; in vitro. Residues C57, C60, H77, and C84 each contribute to the Zn(2+) site. 4 positions are modified to N6-acetyllysine: K90, K110, K112, and K115. T117 carries the phosphothreonine; by AURKB modification.

This sequence belongs to the IAP family. As to quaternary structure, monomer or homodimer. Exists as a homodimer in the apo state and as a monomer in the CPC-bound state. The monomer protects cells against apoptosis more efficiently than the dimer. Only the dimeric form is capable of enhancing tubulin stability in cells. When phosphorylated, interacts with LAMTOR5/HBXIP; the resulting complex binds pro-CASP9, as well as active CASP9, but much less efficiently. Component of the chromosomal passenger complex (CPC) composed of at least BIRC5/survivin, CDCA8/borealin, INCENP, AURKB or AURKC; in the complex forms a triple-helix bundle-based subcomplex with INCENP and CDCA8. Interacts with JTB. Interacts (via BIR domain) with histone H3 phosphorylated at 'Thr-3' (H3pT3). Interacts with EVI5. Interacts with GTP-bound RAN in both the S and M phases of the cell cycle. Interacts with USP9X. Interacts with tubulin. Interacts with BIRC2/c-IAP1. The monomeric form interacts with XIAP/BIRC4. Both the dimeric and monomeric form can interact with DIABLO/SMAC. Interacts with BIRC6/bruce. Interacts with FBXL7; this interaction facilitates the polyubiquitination and subsequent proteasomal degradation of BIRC5 by the SCF(FBXL7) E3 ubiquitin-protein ligase complex. In terms of processing, ubiquitinated by the Cul9-RING ubiquitin-protein ligase complex, leading to its degradation. Ubiquitination is required for centrosomal targeting. Deubiquitinated by USP35 or USP38; leading to stabilization. Post-translationally, in vitro phosphorylation at Thr-117 by AURKB prevents interaction with INCENP and localization to mitotic chromosomes. Phosphorylation at Thr-48 by CK2 is critical for its mitotic and anti-apoptotic activities. Phosphorylation at Thr-34 by CDK15 is critical for its anti-apoptotic activity. Phosphorylation at Ser-20 by AURKC is critical for regulation of proper chromosome alignment and segregation, and possibly cytokinesis. In terms of tissue distribution, expressed in spleen, lung, brain, heart, kidney and intestine (at protein level). Expressed in cochlea including the organ of Corti, the lateral wall, the interdental cells of the Limbus as well as in cells of the cochlear nerve and the spiral ganglions (at protein level). Also expressed in Schwann cells (at protein level). Not expressed in cells of the inner and outer sulcus or the Reissner's membrane (at protein level).

The protein localises to the cytoplasm. It localises to the nucleus. Its subcellular location is the chromosome. The protein resides in the centromere. It is found in the cytoskeleton. The protein localises to the spindle. It localises to the kinetochore. Its subcellular location is the midbody. Functionally, multitasking protein that has dual roles in promoting cell proliferation and preventing apoptosis. Component of a chromosome passage protein complex (CPC) which is essential for chromosome alignment and segregation during mitosis and cytokinesis. Acts as an important regulator of the localization of this complex; directs CPC movement to different locations from the inner centromere during prometaphase to midbody during cytokinesis and participates in the organization of the center spindle by associating with polymerized microtubules. Involved in the recruitment of CPC to centromeres during early mitosis via association with histone H3 phosphorylated at 'Thr-3' (H3pT3) during mitosis. The complex with RAN plays a role in mitotic spindle formation by serving as a physical scaffold to help deliver the RAN effector molecule TPX2 to microtubules. May counteract a default induction of apoptosis in G2/M phase. The acetylated form represses STAT3 transactivation of target gene promoters. May play a role in neoplasia. Inhibitor of CASP3 and CASP7. Essential for the maintenance of mitochondrial integrity and function. The sequence is that of Baculoviral IAP repeat-containing protein 5 from Cavia porcellus (Guinea pig).